A 62-amino-acid polypeptide reads, in one-letter code: Large ribosomal subunit protein eL37 (62 aa).

Cys-20, Cys-23, Cys-35, and Cys-38 together coordinate Zn(2+). The C4-type zinc-finger motif lies at 20 to 38 (CRRCGRHSFNVAKGYCAAC).

It belongs to the eukaryotic ribosomal protein eL37 family. Zn(2+) is required as a cofactor.

In terms of biological role, binds to the 23S rRNA. In Desulfurococcus amylolyticus (strain DSM 18924 / JCM 16383 / VKM B-2413 / 1221n) (Desulfurococcus kamchatkensis), this protein is Large ribosomal subunit protein eL37.